The following is a 99-amino-acid chain: A-type ATP synthase subunit F (99 aa).

Belongs to the V-ATPase F subunit family. In terms of assembly, has multiple subunits with at least A(3), B(3), C, D, E, F, H, I and proteolipid K(x).

The protein localises to the cell membrane. Its function is as follows. Component of the A-type ATP synthase that produces ATP from ADP in the presence of a proton gradient across the membrane. The chain is A-type ATP synthase subunit F from Methanococcus aeolicus (strain ATCC BAA-1280 / DSM 17508 / OCM 812 / Nankai-3).